The primary structure comprises 362 residues: Putative HLA class I histocompatibility antigen, alpha chain H (362 aa).

A signal peptide spans 1–24 (MVLMAPRTLLLLLSGALALTQTWA). Residues 25–114 (RSHSMRYFYT…ALRYYNQSEG (90 aa)) are alpha-1. The Extracellular portion of the chain corresponds to 25–308 (RSHSMRYFYT…EPSSQPTVPI (284 aa)). An N-linked (GlcNAc...) asparagine glycan is attached at Asn-110. The alpha-2 stretch occupies residues 115-206 (GSHTMQVMYG…ENGKETLQRA (92 aa)). Residues 207-298 (DPPKTHMTHH…GLPEPLTLRW (92 aa)) are alpha-3. One can recognise an Ig-like C1-type domain in the interval 209–297 (PKTHMTHHPI…EGLPEPLTLR (89 aa)). A disulfide bridge links Cys-227 with Cys-283. Positions 299-308 (EPSSQPTVPI) are connecting peptide. Residues 309 to 332 (VGIVAGLVLLVAVVTGAVVAAVMW) form a helical membrane-spanning segment. At 333-362 (RKKSSDRKGGSYSQAASSNSAQGSDVSLTA) the chain is on the cytoplasmic side. Residues 337–362 (SDRKGGSYSQAASSNSAQGSDVSLTA) are disordered. Low complexity predominate over residues 342-356 (GSYSQAASSNSAQGS).

This sequence belongs to the MHC class I family. As to quaternary structure, heterodimer of an alpha chain and a beta chain (beta-2-microglobulin).

The protein localises to the cell membrane. Its function is as follows. Involved in the presentation of foreign antigens to the immune system. The protein is Putative HLA class I histocompatibility antigen, alpha chain H (HLA-H) of Homo sapiens (Human).